The following is a 294-amino-acid chain: Acetyl-coenzyme A carboxylase carboxyl transferase subunit beta (294 aa).

Residues 30–294 (IMTKCPECKK…PEVGGEADGE (265 aa)) enclose the CoA carboxyltransferase N-terminal domain. Residues cysteine 34, cysteine 37, cysteine 53, and cysteine 56 each coordinate Zn(2+). The C4-type zinc-finger motif lies at 34 to 56 (CPECKKIMYTKELQKNLMVCNYC).

This sequence belongs to the AccD/PCCB family. In terms of assembly, acetyl-CoA carboxylase is a heterohexamer composed of biotin carboxyl carrier protein (AccB), biotin carboxylase (AccC) and two subunits each of ACCase subunit alpha (AccA) and ACCase subunit beta (AccD). It depends on Zn(2+) as a cofactor.

The protein resides in the cytoplasm. The enzyme catalyses N(6)-carboxybiotinyl-L-lysyl-[protein] + acetyl-CoA = N(6)-biotinyl-L-lysyl-[protein] + malonyl-CoA. Its pathway is lipid metabolism; malonyl-CoA biosynthesis; malonyl-CoA from acetyl-CoA: step 1/1. Component of the acetyl coenzyme A carboxylase (ACC) complex. Biotin carboxylase (BC) catalyzes the carboxylation of biotin on its carrier protein (BCCP) and then the CO(2) group is transferred by the transcarboxylase to acetyl-CoA to form malonyl-CoA. The polypeptide is Acetyl-coenzyme A carboxylase carboxyl transferase subunit beta (Listeria monocytogenes serotype 4a (strain HCC23)).